A 149-amino-acid chain; its full sequence is Protein RhiC (149 aa).

The signal sequence occupies residues 1–23 (MTATLRAFGWLAAFALTVTFAQG).

It localises to the periplasm. May be involved in plant-microbe interaction. The chain is Protein RhiC (rhiC) from Rhizobium leguminosarum bv. viciae.